The primary structure comprises 158 residues: Large ribosomal subunit protein mL50 (158 aa).

The protein belongs to the mitochondrion-specific ribosomal protein mL50 family. Component of the mitochondrial large ribosomal subunit (mt-LSU). Mature mammalian 55S mitochondrial ribosomes consist of a small (28S) and a large (39S) subunit. The 28S small subunit contains a 12S ribosomal RNA (12S mt-rRNA) and 30 different proteins. The 39S large subunit contains a 16S rRNA (16S mt-rRNA), a copy of mitochondrial valine transfer RNA (mt-tRNA(Val)), which plays an integral structural role, and 52 different proteins.

The protein localises to the mitochondrion. The sequence is that of Large ribosomal subunit protein mL50 (MRPL50) from Homo sapiens (Human).